Consider the following 338-residue polypeptide: Glyceraldehyde-3-phosphate dehydrogenase (338 aa).

Residues 12–13, Asp-34, and Arg-79 each bind NAD(+); that span reads RI. D-glyceraldehyde 3-phosphate contacts are provided by residues 150-152, Thr-181, 210-211, and Arg-233; these read SCT and TG. The active-site Nucleophile is the Cys-151. NAD(+) is bound at residue Asn-316.

The protein belongs to the glyceraldehyde-3-phosphate dehydrogenase family. As to quaternary structure, homotetramer.

Its subcellular location is the cytoplasm. The enzyme catalyses D-glyceraldehyde 3-phosphate + phosphate + NAD(+) = (2R)-3-phospho-glyceroyl phosphate + NADH + H(+). The protein operates within carbohydrate degradation; glycolysis; pyruvate from D-glyceraldehyde 3-phosphate: step 1/5. The polypeptide is Glyceraldehyde-3-phosphate dehydrogenase (GPD) (Yarrowia lipolytica (strain CLIB 122 / E 150) (Yeast)).